The chain runs to 307 residues: Type 2A encapsulin shell protein (307 aa).

It belongs to the encapsulin family. Family 2A subfamily. As to quaternary structure, homooligomeric. The encapsulin nanocompartment is formed by 60 subunits; monomers form pentamers which assemble to form shells. There are 12 charged pores where the pentamers meet as well as 3-fold axis channels and dimer channels.

It localises to the encapsulin nanocompartment. Its function is as follows. Shell component of a type 2A encapsulin nanocompartment. Forms encapsulin nanocompartments about 24 nm in diameter from 60 monomers. Probably encapsulates at least cysteine desulfurase (CyD) and allows passage of cysteine into its interior, probably involved in sulfur metabolism. The chain is Type 2A encapsulin shell protein from Mycobacterium avium.